The following is a 126-amino-acid chain: MAVAKKRKVKKNIPEGIVYIYSTFNNTIVTISDKQGNVVSWCSAGVLGFKGSRKSTPFAAQNALADAAKKAADCGMRKVEVKVKGPGPGREAALRALVSTGFEVSRIYDVTPVPHNGCKPPKRRRV.

Belongs to the universal ribosomal protein uS11 family. In terms of assembly, part of the 30S ribosomal subunit. Interacts with proteins S7 and S18. Binds to IF-3.

Functionally, located on the platform of the 30S subunit, it bridges several disparate RNA helices of the 16S rRNA. Forms part of the Shine-Dalgarno cleft in the 70S ribosome. The polypeptide is Small ribosomal subunit protein uS11 (Desulfotalea psychrophila (strain LSv54 / DSM 12343)).